We begin with the raw amino-acid sequence, 551 residues long: HTH-type transcriptional regulator SgrR (551 aa).

Positions 1 to 116 (MPSARLQQQF…LVSHLGRSFR (116 aa)) constitute an HTH marR-type domain. Residues 26-49 (LNELAALLSCSRRHMRTLLNTMQD) constitute a DNA-binding region (H-T-H motif). Residues 163–492 (ELEADIAHHW…IDWQADAARW (330 aa)) are solute-binding.

Activates the small RNA gene sgrS under glucose-phosphate stress conditions as well as yfdZ. Represses its own transcription under both stress and non-stress conditions. Might act as a sensor of the intracellular accumulation of phosphoglucose by binding these molecules in its C-terminal solute-binding domain. The protein is HTH-type transcriptional regulator SgrR of Escherichia coli O1:K1 / APEC.